The chain runs to 383 residues: 8-amino-7-oxononanoate synthase (383 aa).

Arg-22 contacts substrate. 109–110 (GF) is a pyridoxal 5'-phosphate binding site. His-134 serves as a coordination point for substrate. Ser-178, His-206, and Thr-232 together coordinate pyridoxal 5'-phosphate. Residue Lys-235 is modified to N6-(pyridoxal phosphate)lysine. Thr-348 contacts substrate.

It belongs to the class-II pyridoxal-phosphate-dependent aminotransferase family. BioF subfamily. As to quaternary structure, homodimer. Requires pyridoxal 5'-phosphate as cofactor.

The catalysed reaction is 6-carboxyhexanoyl-[ACP] + L-alanine + H(+) = (8S)-8-amino-7-oxononanoate + holo-[ACP] + CO2. It functions in the pathway cofactor biosynthesis; biotin biosynthesis. Its function is as follows. Catalyzes the decarboxylative condensation of pimeloyl-[acyl-carrier protein] and L-alanine to produce 8-amino-7-oxononanoate (AON), [acyl-carrier protein], and carbon dioxide. The protein is 8-amino-7-oxononanoate synthase of Vibrio campbellii (strain ATCC BAA-1116).